A 77-amino-acid chain; its full sequence is U8-lycotoxin-Ls1h (77 aa).

A signal peptide spans methionine 1–valine 20. Residues glutamine 21–arginine 26 constitute a propeptide that is removed on maturation.

It belongs to the neurotoxin 19 (CSTX) family. 08 (U8-Lctx) subfamily. In terms of processing, contains 4 disulfide bonds. As to expression, expressed by the venom gland.

It is found in the secreted. In Lycosa singoriensis (Wolf spider), this protein is U8-lycotoxin-Ls1h.